A 410-amino-acid chain; its full sequence is MATIAQRLRDDHGVAASESSVRRWIATHFAEEVARERVTVPRGPVDAGSEAQIDYGRLGMWFDPATARRVAVWAFVMVLAFSRHLFVRPVIRMDQTAWCACHVAAFEFFDGVPARLVCDNLRTGVDKPDLYDPQINRSYAELASHYATLVDPARARKPKDKPRVERPMTYVRDSFWKGREFDSLAQMQQAAVTWSTEVAGLRYLRALEGAQPLRMFEAVEQQALIALPPRAFELTSWSIGTVGVDTHLKVGKALYSVPWRLIGQRLHARTAGDVVQIFAGNDVVATHVRRPSGRSTDFSHYPPEKIAFHMRTPTWCRHTAELVGPASQQVIAEFMRDNAIHHLRSAQGVLGLRDKHGCDRLEAACARAIEVGDPSYRTIKGILVAGTEHAANEPTTSSPASTAGGVPARP.

The 181-residue stretch at 40–220 folds into the Integrase catalytic domain; that stretch reads VPRGPVDAGS…QPLRMFEAVE (181 aa). A disordered region spans residues 390–410; that stretch reads AANEPTTSSPASTAGGVPARP.

It belongs to the transposase IS21/IS408/IS1162 family.

This Mycobacterium tuberculosis (strain ATCC 25618 / H37Rv) protein is Putative transposase Rv3428c.